Consider the following 623-residue polypeptide: MKREYQDAGGSGGGGGGMGSSEDKMMVSAAAGEGEEVDELLAALGYKVRASDMADVAQKLEQLEMAMGMGGVGAGAAPDDSFATHLATDTVHYNPTDLSSWVESMLSELNAPPPPLPPAPQLNASTSSTVTGSGGYFDLPPSVDSSSSIYALRPIPSPAGATAPADLSADSVRDPKRMRTGGSSTSSSSSSSSSLGGGARSSVVEAAPPVAAAANATPALPVVVVDTQEAGIRLVHALLACAEAVQQENLSAAEALVKQIPLLAASQGGAMRKVAAYFGEALARRVFRFRPQPDSSLLDAAFADLLHAHFYESCPYLKFAHFTANQAILEAFAGCRRVHVVDFGIKQGMQWPALLQALALRPGGPPSFRLTGVGPPQPDETDALQQVGWKLAQFAHTIRVDFQYRGLVAATLADLEPFMLQPEGEEDPNEEPEVIAVNSVFEMHRLLAQPGALEKVLGTVRAVRPRIVTVVEQEANHNSGTFLDRFTESLHYYSTMFDSLEGGSSGGGPSEVSSGAAAAPAAAGTDQVMSEVYLGRQICNVVACEGAERTERHETLGQWRNRLGNAGFETVHLGSNAYKQASTLLALFAGGDGYKVEEKEGCLTLGWHTRPLIATSAWRLAGP.

The interval 1–27 is disordered; it reads MKREYQDAGGSGGGGGGMGSSEDKMMV. Over residues 9 to 19 the composition is skewed to gly residues; the sequence is GGSGGGGGGMG. Positions 38-42 match the DELLA motif motif; sequence DELLA. 2 disordered regions span residues 109 to 138 and 159 to 201; these read LNAPPPPLPPAPQLNASTSSTVTGSGGYFD and AGAT…GARS. Over residues 111-120 the composition is skewed to pro residues; sequence APPPPLPPAP. Composition is skewed to low complexity over residues 121-131 and 181-201; these read QLNASTSSTVT and GGSSTSSSSSSSSSLGGGARS. In terms of domain architecture, GRAS spans 225 to 619; that stretch reads VDTQEAGIRL…RPLIATSAWR (395 aa). Residues 232–288 form a leucine repeat I (LRI) region; the sequence is IRLVHALLACAEAVQQENLSAAEALVKQIPLLAASQGGAMRKVAAYFGEALARRVFR. The LxCxE motif motif lies at 239-243; that stretch reads LACAE. A VHIID region spans residues 307-372; sequence HAHFYESCPY…GGPPSFRLTG (66 aa). Positions 338–342 match the VHIID motif; the sequence is VHVVD. The interval 386 to 425 is leucine repeat II (LRII); it reads QVGWKLAQFAHTIRVDFQYRGLVAATLADLEPFMLQPEGE. Residues 435 to 540 form a PFYRE region; it reads IAVNSVFEMH…EVYLGRQICN (106 aa). Residues 543–619 form an SAW region; it reads ACEGAERTER…RPLIATSAWR (77 aa).

This sequence belongs to the GRAS family. DELLA subfamily. Phosphorylated. Post-translationally, ubiquitinated. Upon GA application it is ubiquitinated, leading to its subsequent degradation.

Its subcellular location is the nucleus. Its function is as follows. Probable transcriptional regulator that acts as a repressor of the gibberellin (GA) signaling pathway. Probably acts by participating in large multiprotein complexes that repress transcription of GA-inducible genes. Upon GA application, it is degraded by the proteasome, allowing the GA signaling pathway. The sequence is that of DELLA protein RHT-1 (RHT1) from Triticum aestivum (Wheat).